Consider the following 447-residue polypeptide: uncharacterized protein (447 aa).

It belongs to the class-II fumarase/aspartase family.

The protein localises to the cytoplasm. It localises to the nucleus. This is an uncharacterized protein from Schizosaccharomyces pombe (strain 972 / ATCC 24843) (Fission yeast).